The chain runs to 93 residues: Small ribosomal subunit protein uS19 (93 aa).

It belongs to the universal ribosomal protein uS19 family.

In terms of biological role, protein S19 forms a complex with S13 that binds strongly to the 16S ribosomal RNA. This is Small ribosomal subunit protein uS19 from Blochmanniella floridana.